The following is a 331-amino-acid chain: Centriolar satellite-associated tubulin polyglutamylase complex regulator 1 (331 aa).

The disordered stretch occupies residues 283-331; the sequence is PTSNNNSSSSALGQKEMSKKASPRKSLHQRKRIEMESDGSTEETDSSEN. Over residues 303 to 313 the composition is skewed to basic residues; it reads ASPRKSLHQRK. Residues 318 to 331 show a composition bias toward acidic residues; it reads ESDGSTEETDSSEN.

This sequence belongs to the CSTPP1 family. Interacts with PCM1. Interacts with the complex TPGC. Binds to alpha-tubulin. Expression in elevated in ciliated tissues/organs, including brain, spinal cord, kidney, eyes, ears and lateral line.

It is found in the cytoplasm. It localises to the cytoskeleton. Its subcellular location is the microtubule organizing center. The protein resides in the centrosome. The protein localises to the centriolar satellite. Functionally, regulator of the tubulin polyglutamylase complex (TPGC) that controls cytoskeletal organization, nuclear shape, and cilium disassembly by balancing microtubule and actin assembly. Regulates the assembly and stability of the TPGC and thereby modulates polyglutamylation of the microtubule, which antagonizes MAP4 binding. This chain is Centriolar satellite-associated tubulin polyglutamylase complex regulator 1 (cstpp1), found in Danio rerio (Zebrafish).